Consider the following 813-residue polypeptide: Enhancer of polycomb homolog 1 (813 aa).

Disordered regions lie at residues F310–F403, M484–L513, and F528–S577. Residues K311–R333 are compositionally biased toward basic and acidic residues. A Glycyl lysine isopeptide (Lys-Gly) (interchain with G-Cter in SUMO2) cross-link involves residue K319. Residues P346–P361 show a composition bias toward low complexity. Residues S486–L513 show a composition bias toward polar residues. S538 bears the Phosphoserine mark. Positions T564–S577 are enriched in low complexity. K650 is covalently cross-linked (Glycyl lysine isopeptide (Lys-Gly) (interchain with G-Cter in SUMO2)). The tract at residues V779–T813 is disordered. The segment covering V788–K797 has biased composition (basic and acidic residues).

The protein belongs to the enhancer of polycomb family. As to quaternary structure, component of the NuA4 histone acetyltransferase complex which contains the catalytic subunit KAT5/TIP60 and the subunits EP400, TRRAP/PAF400, BRD8/SMAP, EPC1, DMAP1/DNMAP1, RUVBL1/TIP49, RUVBL2, ING3, actin, ACTL6A/BAF53A, MORF4L1/MRG15, MORF4L2/MRGX, MRGBP, YEATS4/GAS41, VPS72/YL1 and MEAF6. KAT5/TIP60, EPC1, and ING3 together constitute a minimal HAT complex termed Piccolo NuA4. Component of a NuA4-related complex which contains EP400, TRRAP/PAF400, SRCAP, BRD8/SMAP, EPC1, DMAP1/DNMAP1, RUVBL1/TIP49, RUVBL2, actin, ACTL6A/BAF53A, VPS72 and YEATS4/GAS41. Interacts with TRIM27. Interacts with MBTD1; interaction is direct and promotes recruitment of MBTD1 into the NuA4 histone acetyltransferase complex. In terms of tissue distribution, expressed in adult brain, heart, kidney, liver, lung, skeletal muscle and testis. Expressed in male germ cells, present in round spermatids of steps 1 to 4.

The protein localises to the nucleus. It localises to the cytoplasm. Functionally, component of the NuA4 histone acetyltransferase (HAT) complex, a multiprotein complex involved in transcriptional activation of select genes principally by acetylation of nucleosomal histones H4 and H2A. The NuA4 complex plays a direct role in repair of DNA double-strand breaks (DSBs) by promoting homologous recombination (HR). The NuA4 complex is also required for spermatid development by promoting acetylation of histones: histone acetylation is required for histone replacement during the transition from round to elongating spermatids. In the NuA4 complex, EPC1 is required to recruit MBTD1 into the complex. In Mus musculus (Mouse), this protein is Enhancer of polycomb homolog 1.